A 258-amino-acid chain; its full sequence is DNA repair protein RecO (258 aa).

Belongs to the RecO family.

Involved in DNA repair and RecF pathway recombination. The sequence is that of DNA repair protein RecO from Syntrophotalea carbinolica (strain DSM 2380 / NBRC 103641 / GraBd1) (Pelobacter carbinolicus).